The primary structure comprises 243 residues: Orotidine 5'-phosphate decarboxylase (243 aa).

Substrate is bound by residues Asp-18, Lys-39, 66 to 75 (DLKFHDIPTT), Thr-130, Arg-192, Gln-201, Gly-221, and Arg-222. The active-site Proton donor is the Lys-68.

It belongs to the OMP decarboxylase family. Type 1 subfamily. In terms of assembly, homodimer.

The enzyme catalyses orotidine 5'-phosphate + H(+) = UMP + CO2. It participates in pyrimidine metabolism; UMP biosynthesis via de novo pathway; UMP from orotate: step 2/2. In terms of biological role, catalyzes the decarboxylation of orotidine 5'-monophosphate (OMP) to uridine 5'-monophosphate (UMP). The chain is Orotidine 5'-phosphate decarboxylase from Synechococcus sp. (strain CC9311).